Here is a 193-residue protein sequence, read N- to C-terminus: Protein GrpE (193 aa).

The interval 1-40 (MTEENRPQPDQPELTVTSESSVQETGENKARTPEQEGEAM) is disordered. A compositionally biased stretch (polar residues) spans 14 to 25 (LTVTSESSVQET).

It belongs to the GrpE family. As to quaternary structure, homodimer.

The protein localises to the cytoplasm. Its function is as follows. Participates actively in the response to hyperosmotic and heat shock by preventing the aggregation of stress-denatured proteins, in association with DnaK and GrpE. It is the nucleotide exchange factor for DnaK and may function as a thermosensor. Unfolded proteins bind initially to DnaJ; upon interaction with the DnaJ-bound protein, DnaK hydrolyzes its bound ATP, resulting in the formation of a stable complex. GrpE releases ADP from DnaK; ATP binding to DnaK triggers the release of the substrate protein, thus completing the reaction cycle. Several rounds of ATP-dependent interactions between DnaJ, DnaK and GrpE are required for fully efficient folding. The chain is Protein GrpE from Nitrosospira multiformis (strain ATCC 25196 / NCIMB 11849 / C 71).